The following is a 311-amino-acid chain: Methionyl-tRNA formyltransferase (311 aa).

109–112 contacts (6S)-5,6,7,8-tetrahydrofolate; the sequence is SLLP.

Belongs to the Fmt family.

It carries out the reaction L-methionyl-tRNA(fMet) + (6R)-10-formyltetrahydrofolate = N-formyl-L-methionyl-tRNA(fMet) + (6S)-5,6,7,8-tetrahydrofolate + H(+). In terms of biological role, attaches a formyl group to the free amino group of methionyl-tRNA(fMet). The formyl group appears to play a dual role in the initiator identity of N-formylmethionyl-tRNA by promoting its recognition by IF2 and preventing the misappropriation of this tRNA by the elongation apparatus. The sequence is that of Methionyl-tRNA formyltransferase from Solibacter usitatus (strain Ellin6076).